The primary structure comprises 327 residues: WRKY transcription factor WRKY76 (327 aa).

Positions 56–76 (AKILEAKVTQMSEENRRLTEV) form a coiled coil. The disordered stretch occupies residues 88–134 (LGLDGSASPPRPVSPLSGKKRSRESMETANSCDANSNRHQGGDADHA). The short motif at 106-112 (KKRSRES) is the Nuclear localization signal element. Over residues 114 to 126 (ETANSCDANSNRH) the composition is skewed to polar residues. A DNA-binding region (WRKY) is located at residues 160–226 (DTSLVVKDGY…YEGEHNHPHP (67 aa)).

It belongs to the WRKY group II-a family.

The protein resides in the nucleus. Its function is as follows. Transcription repressor. Interacts specifically with the W box (5'-(T)TGAC[CT]-3'), a frequently occurring elicitor-responsive cis-acting element. Regulates, probably indirectly, the activation of defense-related genes during defense response. Modulates plant innate immunity against X.oryzae pv. oryzae (Xoo). The chain is WRKY transcription factor WRKY76 from Oryza sativa subsp. indica (Rice).